Consider the following 484-residue polypeptide: Transmembrane protein 161B (484 aa).

A helical transmembrane segment spans residues 108-128 (LVDFTVAATVVYLITELYFCV). N-linked (GlcNAc...) asparagine glycosylation is present at N136. Helical transmembrane passes span 137–157 (ISVV…FSLT) and 170–190 (SLCI…LIVT). N204 carries an N-linked (GlcNAc...) asparagine glycan. A run of 4 helical transmembrane segments spans residues 229 to 249 (FKLI…FPGL), 266 to 286 (VTQT…LLWV), 368 to 388 (VFYY…MLLH), and 456 to 476 (LSFF…FGLF).

This sequence belongs to the TMEM161 family.

It is found in the cell membrane. Its function is as follows. Essential for maintaining normal cardiac rhythm in the developing heart and for neonatal survival. Inhibits potassium and calcium currents in the cardiomyocytes, this assists in timely action potential repolarization and thereby maintains normal cardiac rhythm. The chain is Transmembrane protein 161B (tmem161b) from Danio rerio (Zebrafish).